Consider the following 658-residue polypeptide: Endoplasmic reticulum chaperone BiP (658 aa).

The first 19 residues, 1 to 19, serve as a signal peptide directing secretion; sequence MVTMKLFALVLLVSASVFA. Residues 38–41, Lys-98, 228–230, 294–301, and 365–368 each bind ATP; these read GTTY, GGT, EKAKRALS, and GSTR. Residues 127-281 are nucleotide-binding (NBD); it reads KPYIEVDIGD…KKKTGKDVRA (155 aa). The tract at residues 410–420 is interdomain linker; the sequence is QDTGDLVLLDV. The substrate-binding (SBD) stretch occupies residues 421–501; that stretch reads CPLTLGIETV…PRGVPQIEVT (81 aa). Positions 634 to 658 are disordered; the sequence is KLYGGAGAPPPEGAEGAEETEKDEL. Acidic residues predominate over residues 648 to 658; sequence EGAEETEKDEL. Residues 655-658 carry the Prevents secretion from ER motif; the sequence is KDEL.

It belongs to the heat shock protein 70 family. Monomer and homooligomer; homooligomerization via the interdomain linker inactivates the chaperone activity and acts as a storage of hspa5/BiP molecules. Interacts with DNAJC10. Interacts with dnajb9/ERdj4; leading to recruit hspa5/BiP to ern1/ire1. Interacts with ern1/ire1; interaction takes place following interaction with dnajb9/ERdj4 and leads to inactivate ern1/IRE1.

It is found in the endoplasmic reticulum lumen. It carries out the reaction ATP + H2O = ADP + phosphate + H(+). Its activity is regulated as follows. The chaperone activity is regulated by ATP-induced allosteric coupling of the nucleotide-binding (NBD) and substrate-binding (SBD) domains. In the ADP-bound and nucleotide-free (apo) states, the two domains have little interaction. In contrast, in the ATP-bound state the two domains are tightly coupled, which results in drastically accelerated kinetics in both binding and release of polypeptide substrates. J domain-containing co-chaperones (dnajb9/ERdj4 or dnajc10/ERdj5) stimulate the ATPase activity and are required for efficient substrate recognition by hspa5/BiP. Homooligomerization inactivates participating hspa5/BiP protomers and probably act as reservoirs to store hspa5/BiP molecules when they are not needed by the cell. Functionally, endoplasmic reticulum chaperone that plays a key role in protein folding and quality control in the endoplasmic reticulum lumen. Involved in the correct folding of proteins and degradation of misfolded proteins via its interaction with dnajc10/ERdj5, probably to facilitate the release of dnajc10/ERdj5 from its substrate. Acts as a key repressor of the EIF2AK3/PERK and ERN1/IRE1-mediated unfolded protein response (UPR). In the unstressed endoplasmic reticulum, recruited by DNAJB9/ERdj4 to the luminal region of ERN1/IRE1, leading to disrupt the dimerization of ERN1/IRE1, thereby inactivating ERN1/IRE1. Also binds and inactivates EIF2AK3/PERK in unstressed cells. Accumulation of misfolded protein in the endoplasmic reticulum causes release of HSPA5/BiP from ERN1/IRE1 and EIF2AK3/PERK, allowing their homodimerization and subsequent activation. The chain is Endoplasmic reticulum chaperone BiP from Xenopus laevis (African clawed frog).